Reading from the N-terminus, the 350-residue chain is Protein-glutamate methylesterase/protein-glutamine glutaminase (350 aa).

One can recognise a Response regulatory domain in the interval 5–122; the sequence is KVLCVDDSAL…RDGLIEYSEV (118 aa). 4-aspartylphosphate is present on D56. The 195-residue stretch at 152–346 folds into the CheB-type methylesterase domain; the sequence is PFASSEKLVI…ERILTRLGDR (195 aa). Residues S165, H191, and D288 contribute to the active site.

Belongs to the CheB family. In terms of processing, phosphorylated by CheA. Phosphorylation of the N-terminal regulatory domain activates the methylesterase activity.

Its subcellular location is the cytoplasm. It carries out the reaction [protein]-L-glutamate 5-O-methyl ester + H2O = L-glutamyl-[protein] + methanol + H(+). It catalyses the reaction L-glutaminyl-[protein] + H2O = L-glutamyl-[protein] + NH4(+). Its function is as follows. Involved in chemotaxis. Part of a chemotaxis signal transduction system that modulates chemotaxis in response to various stimuli. Catalyzes the demethylation of specific methylglutamate residues introduced into the chemoreceptors (methyl-accepting chemotaxis proteins or MCP) by CheR. Also mediates the irreversible deamidation of specific glutamine residues to glutamic acid. The chain is Protein-glutamate methylesterase/protein-glutamine glutaminase from Bordetella pertussis (strain Tohama I / ATCC BAA-589 / NCTC 13251).